Reading from the N-terminus, the 421-residue chain is Histidine--tRNA ligase (421 aa).

The protein belongs to the class-II aminoacyl-tRNA synthetase family. Homodimer.

It localises to the cytoplasm. The enzyme catalyses tRNA(His) + L-histidine + ATP = L-histidyl-tRNA(His) + AMP + diphosphate + H(+). This chain is Histidine--tRNA ligase, found in Alkaliphilus oremlandii (strain OhILAs) (Clostridium oremlandii (strain OhILAs)).